The primary structure comprises 112 residues: Putative pterin-4-alpha-carbinolamine dehydratase (112 aa).

Residues 1–30 are disordered; the sequence is MSDELQSRTCTPCRGDVPPMTKAEAKRQLA.

This sequence belongs to the pterin-4-alpha-carbinolamine dehydratase family.

It carries out the reaction (4aS,6R)-4a-hydroxy-L-erythro-5,6,7,8-tetrahydrobiopterin = (6R)-L-erythro-6,7-dihydrobiopterin + H2O. This Aromatoleum aromaticum (strain DSM 19018 / LMG 30748 / EbN1) (Azoarcus sp. (strain EbN1)) protein is Putative pterin-4-alpha-carbinolamine dehydratase.